Here is a 257-residue protein sequence, read N- to C-terminus: Proteasome assembly chaperone 1 (257 aa).

Belongs to the PSMG1 family. As to quaternary structure, forms a heterodimer with psmg2.

Functionally, chaperone protein which promotes assembly of the 20S proteasome as part of a heterodimer with psmg2. This is Proteasome assembly chaperone 1 (psmg1) from Nematostella vectensis (Starlet sea anemone).